The primary structure comprises 299 residues: B3 domain-containing transcription factor NGA2 (299 aa).

The segment at 1–21 is disordered; sequence MNQEDKEKPIEEASSSMEREH. Positions 23-129 form a DNA-binding region, TF-B3; it reads FDKVVTPSDV…KLYIDWRRRP (107 aa). A disordered region spans residues 226–249; it reads GGGGSVNSTEEESSSSGGSIPRGR.

It is found in the nucleus. Its function is as follows. Regulates lateral organ growth. Functionally redundant with NGA1, NGA3 and NGA4. This chain is B3 domain-containing transcription factor NGA2 (NGA2), found in Arabidopsis thaliana (Mouse-ear cress).